The primary structure comprises 120 residues: uncharacterized protein (120 aa).

The protein localises to the virion. This is an uncharacterized protein from Acanthamoeba polyphaga mimivirus (APMV).